Consider the following 193-residue polypeptide: Small ribosomal subunit protein eS1 (193 aa).

This sequence belongs to the eukaryotic ribosomal protein eS1 family.

This is Small ribosomal subunit protein eS1 from Sulfurisphaera tokodaii (strain DSM 16993 / JCM 10545 / NBRC 100140 / 7) (Sulfolobus tokodaii).